Consider the following 144-residue polypeptide: Protein CT_635 (144 aa).

A disordered region spans residues 110 to 144 (EVTNDIGHSSHKSPTPKKTKSSSQKKSKKKNWIPL). Positions 118 to 144 (SSHKSPTPKKTKSSSQKKSKKKNWIPL) are enriched in basic residues.

Belongs to the chlamydial CPn_0742/CT_635/TC_0003 family.

This Chlamydia trachomatis serovar D (strain ATCC VR-885 / DSM 19411 / UW-3/Cx) protein is Protein CT_635.